A 304-amino-acid polypeptide reads, in one-letter code: CRISPR-associated endonuclease Cas1 (304 aa).

Residues Glu148, His204, and Glu219 each contribute to the Mn(2+) site.

It belongs to the CRISPR-associated endonuclease Cas1 family. Homodimer, forms a heterotetramer with a Cas2 homodimer. It depends on Mg(2+) as a cofactor. Mn(2+) serves as cofactor.

Functionally, CRISPR (clustered regularly interspaced short palindromic repeat), is an adaptive immune system that provides protection against mobile genetic elements (viruses, transposable elements and conjugative plasmids). CRISPR clusters contain spacers, sequences complementary to antecedent mobile elements, and target invading nucleic acids. CRISPR clusters are transcribed and processed into CRISPR RNA (crRNA). Acts as a dsDNA endonuclease. Involved in the integration of spacer DNA into the CRISPR cassette. In Neisseria meningitidis serogroup C (strain 8013), this protein is CRISPR-associated endonuclease Cas1.